A 339-amino-acid chain; its full sequence is AT-hook motif nuclear-localized protein 26 (339 aa).

Residues 1 to 12 (MDPVQSHGSQSS) are compositionally biased toward polar residues. 2 disordered regions span residues 1-132 (MDPV…NKPK) and 273-339 (MQTP…RPPY). The segment covering 24-45 (LHLQQQQQHQQQHQQQQQQQFF) has biased composition (low complexity). A compositionally biased stretch (polar residues) spans 82–93 (NMDNIANTNSGS). Residues 102-113 (GGEGGSGGGGSG) are compositionally biased toward gly residues. Residues 118–130 (RRPRGRPAGSKNK) constitute a DNA-binding region (a.T hook). A PPC domain is found at 142 to 279 (ANALRTHVME…EDEMQTPVQG (138 aa)). A compositionally biased stretch (gly residues) spans 278–291 (QGGGGGGGGGGGMG). Over residues 292-310 (SPPMMGQQQAMAAMAAAQG) the composition is skewed to low complexity.

It localises to the nucleus. In terms of biological role, transcription factor that specifically binds AT-rich DNA sequences related to the nuclear matrix attachment regions (MARs). The chain is AT-hook motif nuclear-localized protein 26 from Arabidopsis thaliana (Mouse-ear cress).